The sequence spans 96 residues: DNA/RNA-binding protein Alba (96 aa).

Belongs to the histone-like Alba family.

Its subcellular location is the cytoplasm. The protein resides in the chromosome. Its function is as follows. Binds double-stranded DNA tightly but without sequence specificity. Involved in DNA compaction. The protein is DNA/RNA-binding protein Alba of Methanocella arvoryzae (strain DSM 22066 / NBRC 105507 / MRE50).